The following is an 833-amino-acid chain: Serine-rich coiled-coil domain-containing protein 2 (833 aa).

The tract at residues 178–208 is disordered; sequence NRSSGNVQKPRVNSCASRSSSGESLAQSPDN. Over residues 191–208 the composition is skewed to polar residues; it reads SCASRSSSGESLAQSPDN. At Ser222 the chain carries Phosphoserine. Disordered stretches follow at residues 321-345, 424-452, 478-508, and 602-631; these read LLKS…PADM, NRTR…FDSP, KHTS…SSDG, and DHYH…ESPL. Ser451 carries the phosphoserine modification. A compositionally biased stretch (low complexity) spans 496-506; the sequence is SSFELSPSDSS. Positions 606 to 615 are enriched in basic residues; it reads LSHPGHYHHH. Residues 711–747 adopt a coiled-coil conformation; sequence DQIYKNEDLLNEITQLKEEIKKKDEKIQLLEQQLATR. Residues 789 to 833 are disordered; that stretch reads FQGMPRTVPPHRRQTSSTTAFQQPSQIYRPRPGKTNKATTYRGPQ. The segment covering 803-814 has biased composition (polar residues); it reads TSSTTAFQQPSQ.

This sequence belongs to the CCSER family. As to expression, expressed in brain (at protein level).

It is found in the cytoplasm. The protein resides in the cytoskeleton. Functionally, microtubule-binding protein which might play a role in microtubule bundling. The protein is Serine-rich coiled-coil domain-containing protein 2 (Ccser2) of Mus musculus (Mouse).